Consider the following 54-residue polypeptide: Large ribosomal subunit protein bL33 (54 aa).

Belongs to the bacterial ribosomal protein bL33 family.

This chain is Large ribosomal subunit protein bL33, found in Corynebacterium jeikeium (strain K411).